Here is a 44-residue protein sequence, read N- to C-terminus: Photosystem I reaction center subunit IX (44 aa).

A helical membrane pass occupies residues 7-27 (YLSVAPVLSTLWFGALAGLLI).

Belongs to the PsaJ family.

The protein localises to the plastid. It localises to the chloroplast thylakoid membrane. Its function is as follows. May help in the organization of the PsaE and PsaF subunits. The sequence is that of Photosystem I reaction center subunit IX from Coffea arabica (Arabian coffee).